A 127-amino-acid polypeptide reads, in one-letter code: Aspartate 1-decarboxylase (127 aa).

Ser25 acts as the Schiff-base intermediate with substrate; via pyruvic acid in catalysis. Ser25 carries the post-translational modification Pyruvic acid (Ser). Residue Thr57 coordinates substrate. The active-site Proton donor is Tyr58. A substrate-binding site is contributed by 73-75; sequence GAA.

The protein belongs to the PanD family. As to quaternary structure, heterooctamer of four alpha and four beta subunits. The cofactor is pyruvate. Post-translationally, is synthesized initially as an inactive proenzyme, which is activated by self-cleavage at a specific serine bond to produce a beta-subunit with a hydroxyl group at its C-terminus and an alpha-subunit with a pyruvoyl group at its N-terminus.

It is found in the cytoplasm. It carries out the reaction L-aspartate + H(+) = beta-alanine + CO2. It functions in the pathway cofactor biosynthesis; (R)-pantothenate biosynthesis; beta-alanine from L-aspartate: step 1/1. Its function is as follows. Catalyzes the pyruvoyl-dependent decarboxylation of aspartate to produce beta-alanine. This Clostridium botulinum (strain 657 / Type Ba4) protein is Aspartate 1-decarboxylase.